Reading from the N-terminus, the 387-residue chain is 3-hydroxyisobutyryl-CoA hydrolase-like protein 5 (387 aa).

N-acetylalanine is present on A2.

Belongs to the enoyl-CoA hydratase/isomerase family.

In Arabidopsis thaliana (Mouse-ear cress), this protein is 3-hydroxyisobutyryl-CoA hydrolase-like protein 5.